We begin with the raw amino-acid sequence, 607 residues long: Albumin (607 aa).

The N-terminal stretch at 1 to 18 is a signal peptide; it reads MKWVTFISLLLLFSSAYS. Positions 19-24 are excised as a propeptide; the sequence is RGVFRR. 3 Albumin domains span residues 19 to 209, 210 to 402, and 403 to 600; these read RGVF…DAMR, EKVL…KLKH, and LVDE…KLVA. Cu cation is bound at residue H27. A Phosphoserine modification is found at S29. Ca(2+)-binding residues include E30 and D37. C77 and C86 are disulfide-bonded. 2 positions are modified to phosphoserine: S82 and S89. H91 lines the Zn(2+) pocket. Disulfide bonds link C99–C115, C114–C125, C147–C192, C191–C200, C223–C269, and C268–C276. Position 107 is a phosphothreonine (T107). At K228 the chain carries N6-succinyllysine. E267 contacts Ca(2+). 2 residues coordinate Zn(2+): H270 and D272. Ca(2+) is bound by residues D272, E275, D278, and D282. 8 cysteine pairs are disulfide-bonded: C288–C302, C301–C312, C339–C384, C383–C392, C415–C461, C460–C471, C484–C500, and C499–C510. The residue at position 296 (S296) is a Phosphoserine. At S442 the chain carries Phosphoserine. Phosphothreonine occurs at positions 443 and 445. K459 is modified (N6-succinyllysine). S512 carries the phosphoserine modification. 2 cysteine pairs are disulfide-bonded: C537–C582 and C581–C590. K557 carries the post-translational modification N6-methyllysine. The residue at position 569 (T569) is a Phosphothreonine. K587 is subject to N6-succinyllysine.

Belongs to the ALB/AFP/VDB family. Interacts with FCGRT; this interaction regulates ALB homeostasis. Interacts with TASOR. In plasma, occurs in a covalently-linked complex with chromophore-bound alpha-1-microglobulin; this interaction does not prevent fatty acid binding to ALB. Phosphorylated by FAM20C in the extracellular medium. Plasma.

It is found in the secreted. In terms of biological role, binds water, Ca(2+), Na(+), K(+), fatty acids, hormones, bilirubin and drugs. Its main function is the regulation of the colloidal osmotic pressure of blood. Major zinc transporter in plasma, typically binds about 80% of all plasma zinc. Major calcium and magnesium transporter in plasma, binds approximately 45% of circulating calcium and magnesium in plasma. Potentially has more than two calcium-binding sites and might additionally bind calcium in a non-specific manner. The shared binding site between zinc and calcium at residue Asp-272 suggests a crosstalk between zinc and calcium transport in the blood. The rank order of affinity is zinc &gt; calcium &gt; magnesium. Binds to the bacterial siderophore enterobactin and inhibits enterobactin-mediated iron uptake of E.coli from ferric transferrin, and may thereby limit the utilization of iron and growth of enteric bacteria such as E.coli. Does not prevent iron uptake by the bacterial siderophore aerobactin. The protein is Albumin (ALB) of Ovis aries (Sheep).